Reading from the N-terminus, the 156-residue chain is Small ribosomal subunit protein uS7 (156 aa).

This sequence belongs to the universal ribosomal protein uS7 family. In terms of assembly, part of the 30S ribosomal subunit. Contacts proteins S9 and S11.

Functionally, one of the primary rRNA binding proteins, it binds directly to 16S rRNA where it nucleates assembly of the head domain of the 30S subunit. Is located at the subunit interface close to the decoding center, probably blocks exit of the E-site tRNA. This is Small ribosomal subunit protein uS7 from Alkaliphilus metalliredigens (strain QYMF).